An 89-amino-acid chain; its full sequence is Large ribosomal subunit protein bL27 (89 aa).

Residues 1–26 (MAHKKAGGSSKNGRDSNAQRRGVKRF) are disordered.

This sequence belongs to the bacterial ribosomal protein bL27 family.

The protein is Large ribosomal subunit protein bL27 of Maridesulfovibrio salexigens (strain ATCC 14822 / DSM 2638 / NCIMB 8403 / VKM B-1763) (Desulfovibrio salexigens).